A 690-amino-acid polypeptide reads, in one-letter code: Probable serine/threonine-protein kinase drkB (690 aa).

The signal sequence occupies residues 1–24 (MKVQIVFFSITVFIFVLFLLSVES). Residues 51-110 (DSKSSEHTTSSSSSSNSKNKGDSSSSSSNSGSSSNSIISGDSNSKDAPTTSSDSLSPATP) form a disordered region. Residues 57–96 (HTTSSSSSSNSKNKGDSSSSSSNSGSSSNSIISGDSNSKD) show a composition bias toward low complexity. Residues 97-107 (APTTSSDSLSP) are compositionally biased toward polar residues. 4 N-linked (GlcNAc...) asparagine glycosylation sites follow: N134, N180, N220, and N250. Positions 287–335 (TITPTPTITPTPTITPTVTPTATPSTTPSTTPTTTPSTPTPTPTKSPYS) are disordered. Low complexity predominate over residues 296 to 323 (PTPTITPTVTPTATPSTTPSTTPTTTPS). Residues 346-366 (IIIASSITGGLLISIFSFVFI) form a helical membrane-spanning segment. In terms of domain architecture, Protein kinase spans 391-644 (IKIGVRIGKG…EQCLEILESI (254 aa)). Residues 397 to 405 (IGKGNFGEV) and K418 each bind ATP. The active-site Proton acceptor is D514. Residues 649–690 (FDDIPVNNNNNNNSNNNENNNENNNNSDNNNNDINYSNRVIN) form a disordered region. A compositionally biased stretch (low complexity) spans 655–681 (NNNNNNNSNNNENNNENNNNSDNNNND).

This sequence belongs to the protein kinase superfamily. TKL Ser/Thr protein kinase family.

The protein localises to the membrane. The catalysed reaction is L-seryl-[protein] + ATP = O-phospho-L-seryl-[protein] + ADP + H(+). The enzyme catalyses L-threonyl-[protein] + ATP = O-phospho-L-threonyl-[protein] + ADP + H(+). This chain is Probable serine/threonine-protein kinase drkB (drkB), found in Dictyostelium discoideum (Social amoeba).